The chain runs to 378 residues: Cobalt-precorrin-5B C(1)-methyltransferase (378 aa).

Belongs to the CbiD family.

The enzyme catalyses Co-precorrin-5B + S-adenosyl-L-methionine = Co-precorrin-6A + S-adenosyl-L-homocysteine. Its pathway is cofactor biosynthesis; adenosylcobalamin biosynthesis; cob(II)yrinate a,c-diamide from sirohydrochlorin (anaerobic route): step 6/10. Functionally, catalyzes the methylation of C-1 in cobalt-precorrin-5B to form cobalt-precorrin-6A. The protein is Cobalt-precorrin-5B C(1)-methyltransferase of Thermoplasma volcanium (strain ATCC 51530 / DSM 4299 / JCM 9571 / NBRC 15438 / GSS1).